The following is a 314-amino-acid chain: Ketimine reductase mu-crystallin (314 aa).

Arginine 47 is a 3,3',5-triiodo-L-thyronine binding site. NADPH is bound by residues serine 91, histidine 92, arginine 119, alanine 144, valine 146, glutamine 147, asparagine 168, arginine 169, threonine 170, asparagine 173, threonine 205, and methionine 206. Glutamate 257 lines the 3,3',5-triiodo-L-thyronine pocket. Serine 292 contributes to the NADPH binding site.

Belongs to the ornithine cyclodeaminase/mu-crystallin family. Homodimer. Binds the thyroid hormone triiodothyronine (T3); T3 binding inhibits enzymatic activity.

The protein localises to the cytoplasm. The catalysed reaction is L-pipecolate + NAD(+) = Delta(1)-piperideine-2-carboxylate + NADH + H(+). The enzyme catalyses L-pipecolate + NADP(+) = Delta(1)-piperideine-2-carboxylate + NADPH + H(+). It carries out the reaction L-proline + NADP(+) = 1-pyrroline-2-carboxylate + NADPH + H(+). It catalyses the reaction L-proline + NAD(+) = 1-pyrroline-2-carboxylate + NADH + H(+). The catalysed reaction is (3R)-1,4-thiomorpholine-3-carboxylate + NAD(+) = 3,4-dehydrothiomorpholine-3-carboxylate + NADH + 2 H(+). The enzyme catalyses (3R)-1,4-thiomorpholine-3-carboxylate + NADP(+) = 3,4-dehydrothiomorpholine-3-carboxylate + NADPH + 2 H(+). It carries out the reaction (S)-cystathionine ketimine + NADH + 2 H(+) = (3R,5S)-2,3,5,6,7-pentahydro-1,4-thiazepine-3,5-dicarboxylate + NAD(+). It catalyses the reaction (S)-cystathionine ketimine + NADPH + 2 H(+) = (3R,5S)-2,3,5,6,7-pentahydro-1,4-thiazepine-3,5-dicarboxylate + NADP(+). The catalysed reaction is (R)-lanthionine ketimine + NADPH + 2 H(+) = (3R,5R)-1,4-thiomorpholine-3,5-dicarboxylate + NADP(+). The enzyme catalyses Delta(2)-thiazoline-2-carboxylate + NADPH + 2 H(+) = L-thiazolidine-2-carboxylate + NADP(+). Functionally, catalyzes the NAD(P)H-dependent reduction of imine double bonds of a number of cyclic ketimine substrates, including sulfur-containing cyclic ketimines. Under physiological conditions, it efficiently catalyzes delta(1)-piperideine-2-carboxylate (P2C) and delta(1)-pyrroline-2-carboxylate (Pyr2C) reduction, suggesting a central role in lysine and glutamate metabolism. Additional substrates are (S)-cystathionine ketimine (CysK), 3,4-dehydrothiomorpholine-3-carboxylate (AECK), and (R)-lanthionine ketimine (LK) that is reduced at very low rate compared to other substrates. Also catalyzes the NAD(P)H-dependent reduction of delta(2)-thiazoline-2-carboxylate (T2C). The protein is Ketimine reductase mu-crystallin (CRYM) of Bos taurus (Bovine).